Here is a 296-residue protein sequence, read N- to C-terminus: Small ribosomal subunit protein uS2 (296 aa).

Disordered stretches follow at residues 1–24 (MNTK…TQSQ) and 270–296 (HELK…EASQ).

This sequence belongs to the universal ribosomal protein uS2 family.

This Mycoplasmopsis synoviae (strain 53) (Mycoplasma synoviae) protein is Small ribosomal subunit protein uS2.